The sequence spans 526 residues: Methane monooxygenase component A alpha chain (526 aa).

The Fe cation site is built by Glu-114, Glu-144, and His-147. Residue Cys-151 is part of the active site. Fe cation-binding residues include Glu-209, Glu-243, and His-246.

This sequence belongs to the TmoA/XamoA family. In terms of assembly, m.trichosporium has two forms of methane monooxygenase, a soluble and a membrane-bound type. The soluble type consists of four components (A to D): protein A, comprising three chains, in an alpha-2, beta-2, gamma-2 configuration, is a nonheme iron protein containing an unusual mu-hydroxo bridge structure at its active site and interacts with both oxygen and methane. Fe cation is required as a cofactor.

It catalyses the reaction methane + NADH + O2 + H(+) = methanol + NAD(+) + H2O. The catalysed reaction is methane + NADPH + O2 + H(+) = methanol + NADP(+) + H2O. Responsible for the initial oxygenation of methane to methanol in methanotrophs. It also catalyzes the monohydroxylation of a variety of unactivated alkenes, alicyclic, aromatic and heterocyclic compounds. This chain is Methane monooxygenase component A alpha chain (mmoX), found in Methylosinus trichosporium.